The following is a 715-amino-acid chain: Polyribonucleotide nucleotidyltransferase (715 aa).

Mg(2+) contacts are provided by D487 and D493. A KH domain is found at 554–613 (PRLYTFKINPEKIRDVIGKGGAVIRALTEETGTTIDIQDDGTITIAATSGEAAAAARSRI). The 69-residue stretch at 623 to 691 (GKIYEGTVLK…DRGRVKLSMK (69 aa)) folds into the S1 motif domain.

This sequence belongs to the polyribonucleotide nucleotidyltransferase family. It depends on Mg(2+) as a cofactor.

The protein resides in the cytoplasm. It carries out the reaction RNA(n+1) + phosphate = RNA(n) + a ribonucleoside 5'-diphosphate. Functionally, involved in mRNA degradation. Catalyzes the phosphorolysis of single-stranded polyribonucleotides processively in the 3'- to 5'-direction. The protein is Polyribonucleotide nucleotidyltransferase of Dechloromonas aromatica (strain RCB).